The sequence spans 205 residues: Ribosomal RNA large subunit methyltransferase E (205 aa).

Residues glycine 60, tryptophan 62, aspartate 80, aspartate 96, and aspartate 121 each contribute to the S-adenosyl-L-methionine site. The Proton acceptor role is filled by lysine 161.

It belongs to the class I-like SAM-binding methyltransferase superfamily. RNA methyltransferase RlmE family.

The protein resides in the cytoplasm. The catalysed reaction is uridine(2552) in 23S rRNA + S-adenosyl-L-methionine = 2'-O-methyluridine(2552) in 23S rRNA + S-adenosyl-L-homocysteine + H(+). In terms of biological role, specifically methylates the uridine in position 2552 of 23S rRNA at the 2'-O position of the ribose in the fully assembled 50S ribosomal subunit. This Chromobacterium violaceum (strain ATCC 12472 / DSM 30191 / JCM 1249 / CCUG 213 / NBRC 12614 / NCIMB 9131 / NCTC 9757 / MK) protein is Ribosomal RNA large subunit methyltransferase E.